Here is a 324-residue protein sequence, read N- to C-terminus: Methyltransferase pytC (324 aa).

The interval 1 to 28 is disordered; that stretch reads MTVRTAAEPPNRIEVDMDAPSLDTDSSC.

This sequence belongs to the methyltransferase superfamily. LaeA methyltransferase family.

Its pathway is secondary metabolite biosynthesis. In terms of biological role, methyltransferase; part of the gene cluster that mediates the biosynthesis of pyranterreones, a family of antioxidative compounds. The first step of pyranonigrins biosynthesis is performed by the hybrid PKS-NRPS synthetase pytA that condenses 4 malonyl-CoA units ato the acetyl starter unit by the modular PKS of pytA. The acyl chain is then connected to an L-serine through the amide bond by the modular NRPS of pytA. A tetramic acid is formed and released from the PKS-NRPS pytA to give pyranterreone 5 with the help of the thioesterase pytI. Pyranterreone 5 could be methylated by pytC to afford pyranterreone 6. Both pyranterreones 5 and 6 are subsequently oxidized by the FAD-linked oxidoreductase pytB and the cytochrome P450 monooxygenase pytD to form the fused gamma-pyrone core, resulting in pyranterreones 7 and 11, respectively. The hydroxy group at C-8 of pyranterreones 7 and 11 are dehydrated by the aspartyl protease pytH to form a delta-7 double bond to give pyranterreones 3 and 1, 2 accordingly. The exo-methylene of pyranterreone 3 could be reduced into a pendant methyl by reductase pytE to provide pyranterreone 4, also known as cordylactam. Pyranterreone 4 can be reconverted to pyranterreone 3 through pytB-catalyzed dehydrogenation or further oxidized to pyranterreones 9 and 10. The polypeptide is Methyltransferase pytC (Aspergillus terreus).